The chain runs to 879 residues: Phosphoenolpyruvate carboxylase (879 aa).

Residues H138 and K545 contribute to the active site.

Belongs to the PEPCase type 1 family. It depends on Mg(2+) as a cofactor.

The enzyme catalyses oxaloacetate + phosphate = phosphoenolpyruvate + hydrogencarbonate. Forms oxaloacetate, a four-carbon dicarboxylic acid source for the tricarboxylic acid cycle. The protein is Phosphoenolpyruvate carboxylase of Haemophilus influenzae (strain PittEE).